The chain runs to 563 residues: Delta-1-pyrroline-5-carboxylate dehydrogenase, mitochondrial (563 aa).

The N-terminal 24 residues, 1-24 (MLLPAPALRRALLSRPWTGAGLRW), are a transit peptide targeting the mitochondrion. The residue at position 31 (Lys-31) is an N6-succinyllysine. A Phosphoserine modification is found at Ser-44. Lys-52 is modified (N6-acetyllysine). An N6-acetyllysine; alternate mark is found at Lys-93, Lys-99, Lys-114, Lys-130, and Lys-175. Residues Lys-93, Lys-99, Lys-114, Lys-130, and Lys-175 each carry the N6-succinyllysine; alternate modification. NAD(+) is bound by residues Ser-208, Lys-233, and 286-290 (GSVPT). The active-site Proton acceptor is Glu-314. The residue at position 318 (Lys-318) is an N6-acetyllysine. Lys-347 is subject to N6-succinyllysine. Residue Cys-348 is the Nucleophile of the active site. Residues Lys-365 and Lys-376 each carry the N6-acetyllysine modification. Residue Lys-395 is modified to N6-succinyllysine. Glu-447 provides a ligand contact to NAD(+). The residue at position 462 (Lys-462) is an N6-acetyllysine. Lys-509 is subject to N6-acetyllysine; alternate. Lys-509 is modified (N6-succinyllysine; alternate). Ser-513 serves as a coordination point for substrate. N6-acetyllysine occurs at positions 531 and 552.

The protein belongs to the aldehyde dehydrogenase family. As to quaternary structure, homodimer. In terms of tissue distribution, highest expression is found in liver followed by skeletal muscle, kidney, heart, brain, placenta, lung and pancreas.

It localises to the mitochondrion matrix. The enzyme catalyses L-glutamate 5-semialdehyde + NAD(+) + H2O = L-glutamate + NADH + 2 H(+). It participates in amino-acid degradation; L-proline degradation into L-glutamate; L-glutamate from L-proline: step 2/2. Its function is as follows. Irreversible conversion of delta-1-pyrroline-5-carboxylate (P5C), derived either from proline or ornithine, to glutamate. This is a necessary step in the pathway interconnecting the urea and tricarboxylic acid cycles. The preferred substrate is glutamic gamma-semialdehyde, other substrates include succinic, glutaric and adipic semialdehydes. The protein is Delta-1-pyrroline-5-carboxylate dehydrogenase, mitochondrial (ALDH4A1) of Homo sapiens (Human).